We begin with the raw amino-acid sequence, 238 residues long: Complement C1q-like protein 4 (238 aa).

The signal sequence occupies residues 1–15 (MVLLLLVAIPLLVHS). The disordered stretch occupies residues 36-101 (GPRGPGPDGA…PPGPGPGGVA (66 aa)). The Collagen-like domain occupies 53–96 (PPGAKGEVGRRGKAGLRGPPGPPGPRGPPGEPGRPGPPGPPGPG). Positions 71–96 (PPGPPGPRGPPGEPGRPGPPGPPGPG) are enriched in pro residues. Residues 105-238 (GYVPRIAFYA…TFSGFIIYPD (134 aa)) enclose the C1q domain.

Forms homooligomers, predominantly dimers or trimers. Forms heterooligomers with C1QL1, C1QL2 and C1QL3, when proteins are coexpressed; this interaction does not occur after secretion. Interacts with ADGRB3. As to expression, highest expression levels in testis and adipose tissue, lower levels in skeletal muscle and kidney.

The protein resides in the secreted. May regulate the number of excitatory synapses that are formed on hippocampus neurons. Has no effect on inhibitory synapses. May inhibit adipocyte differentiation at an early stage of the process. This chain is Complement C1q-like protein 4 (C1QL4), found in Homo sapiens (Human).